Reading from the N-terminus, the 341-residue chain is UDP-N-acetylenolpyruvoylglucosamine reductase (341 aa).

Residues F13–A185 form the FAD-binding PCMH-type domain. The active site involves R161. Catalysis depends on S231, which acts as the Proton donor. E327 is an active-site residue.

The protein belongs to the MurB family. FAD is required as a cofactor.

Its subcellular location is the cytoplasm. It carries out the reaction UDP-N-acetyl-alpha-D-muramate + NADP(+) = UDP-N-acetyl-3-O-(1-carboxyvinyl)-alpha-D-glucosamine + NADPH + H(+). Its pathway is cell wall biogenesis; peptidoglycan biosynthesis. Functionally, cell wall formation. This Shewanella sp. (strain MR-7) protein is UDP-N-acetylenolpyruvoylglucosamine reductase.